A 565-amino-acid chain; its full sequence is NAD-dependent malic enzyme (565 aa).

Tyr-104 (proton donor) is an active-site residue. Position 157 (Arg-157) interacts with NAD(+). Catalysis depends on Lys-175, which acts as the Proton acceptor. A divalent metal cation-binding residues include Glu-246, Asp-247, and Asp-270. NAD(+)-binding residues include Asp-270 and Asn-418.

This sequence belongs to the malic enzymes family. As to quaternary structure, homotetramer. Mg(2+) is required as a cofactor. The cofactor is Mn(2+).

The enzyme catalyses (S)-malate + NAD(+) = pyruvate + CO2 + NADH. It carries out the reaction oxaloacetate + H(+) = pyruvate + CO2. In Serratia proteamaculans (strain 568), this protein is NAD-dependent malic enzyme.